The chain runs to 48 residues: Probable antitoxin PhoAT (48 aa).

Belongs to the PhoAT antitoxin family. Interacts with toxin PhoH2.

In terms of biological role, probable antitoxin component of a type II toxin-antitoxin (TA) system. The probable cognate antitoxin is PhoAT; the toxin gene can be expressed in the absence of the antitoxin gene in M.smegmatis strain mc(2)155. The polypeptide is Probable antitoxin PhoAT (Mycolicibacterium smegmatis (strain ATCC 700084 / mc(2)155) (Mycobacterium smegmatis)).